The primary structure comprises 248 residues: PF03932 family protein CutC (248 aa).

The protein belongs to the CutC family. In terms of assembly, homodimer.

It localises to the cytoplasm. In Salmonella heidelberg (strain SL476), this protein is PF03932 family protein CutC.